Consider the following 773-residue polypeptide: uncharacterized protein (773 aa).

The segment at 192-219 is disordered; the sequence is EASGTNNNPKEIEMNSDTTSSVPKSGST.

The protein localises to the cytoplasm. This is an uncharacterized protein from Schizosaccharomyces pombe (strain 972 / ATCC 24843) (Fission yeast).